A 615-amino-acid polypeptide reads, in one-letter code: DNA mismatch repair protein MutL (615 aa).

Residues 363-397 (FAEPAAREPVAPRYSPAPASGSRPAAPWPNAQPGY) form a disordered region. The segment covering 364 to 387 (AEPAAREPVAPRYSPAPASGSRPA) has biased composition (low complexity).

It belongs to the DNA mismatch repair MutL/HexB family.

Functionally, this protein is involved in the repair of mismatches in DNA. It is required for dam-dependent methyl-directed DNA mismatch repair. May act as a 'molecular matchmaker', a protein that promotes the formation of a stable complex between two or more DNA-binding proteins in an ATP-dependent manner without itself being part of a final effector complex. The protein is DNA mismatch repair protein MutL of Shigella flexneri.